The sequence spans 60 residues: uncharacterized protein (60 aa).

This is an uncharacterized protein from Lepidoptera (butterflies and moths).